Here is a 437-residue protein sequence, read N- to C-terminus: Putative metabolite transport protein NicT (437 aa).

12 helical membrane-spanning segments follow: residues 28-48 (LIPFLCFCYLAAYLDRINVGF), 66-86 (LGAGLFFVGYIIFEVPSNLIL), 93-113 (LWIARIMITWGLLSACTMFVT), 123-143 (FLLGAAEAGFLPGVLYYLTMW), 152-172 (IIALFMIGLPLSSVIGGPISG), 189-209 (WLFLLEAIPSVLLGILTFWAL), 254-274 (VWMLGGIDFSILLSAYAMGFW), 290-310 (IGLLTAIPSLAALAGMLMIGA), 320-340 (WHIIVPFIIGAIAMASSTLFS), 347-367 (VVLFAIASAAIIGAVPVFFSL), 374-394 (GTAAATGFALACSVANIAGLV), and 411-431 (AALWVFAGCLILSCFLVIALP).

This sequence belongs to the major facilitator superfamily.

The protein resides in the membrane. In terms of biological role, probable transporter, possibly involved in the aerobic nicotinate degradation pathway. This is Putative metabolite transport protein NicT (nicT) from Pseudomonas putida (strain ATCC 47054 / DSM 6125 / CFBP 8728 / NCIMB 11950 / KT2440).